The primary structure comprises 172 residues: Small ribosomal subunit protein uS5 (172 aa).

The S5 DRBM domain maps to 17-80 (LREKMISVNR…EQARRNMFKV (64 aa)).

It belongs to the universal ribosomal protein uS5 family. In terms of assembly, part of the 30S ribosomal subunit. Contacts proteins S4 and S8.

Its function is as follows. With S4 and S12 plays an important role in translational accuracy. Located at the back of the 30S subunit body where it stabilizes the conformation of the head with respect to the body. The sequence is that of Small ribosomal subunit protein uS5 from Paraburkholderia phytofirmans (strain DSM 17436 / LMG 22146 / PsJN) (Burkholderia phytofirmans).